The chain runs to 677 residues: mRNA export factor Gle1 (677 aa).

Residues 34–48 (EDREPIWVEGSRKTP) are compositionally biased toward basic and acidic residues. 3 disordered regions span residues 34–65 (EDREPIWVEGSRKTPEPPLPEESPAPEPNNEI), 113–136 (KQDAMRLSRETQQRKEERQRDQLQ), and 294–366 (ERQR…ATST). Pro residues predominate over residues 49–60 (EPPLPEESPAPE). Coiled-coil stretches lie at residues 122–179 (ETQQ…QKLH) and 280–346 (QQQL…AANV). Over residues 294–340 (ERQRQQQQEEERQKLEEQQKLEEQEKLRKEKEESAAKEKQQEAETAK) the composition is skewed to basic and acidic residues.

This sequence belongs to the GLE1 family. In terms of assembly, may associate with the NPC.

It localises to the cytoplasm. It is found in the nucleus. The protein localises to the nuclear pore complex. Its function is as follows. Required for the export of mRNAs containing poly(A) tails from the nucleus into the cytoplasm. May be involved in the terminal step of the mRNA transport through the nuclear pore complex (NPC). The polypeptide is mRNA export factor Gle1 (Drosophila melanogaster (Fruit fly)).